The following is a 110-amino-acid chain: MSQYASRSDSKGALDSSSPEAYTEDDKTEEDIPAPSNYLWLTIISCFCPAYPVNIVALVFSIMSLNSYNDGDYEGARRLGRNAKWVAIASIIIGLVIIGVSCAVHFSRNP.

A disordered region spans residues 1 to 32; it reads MSQYASRSDSKGALDSSSPEAYTEDDKTEEDI. Residues 1 to 42 lie on the Cytoplasmic side of the membrane; it reads MSQYASRSDSKGALDSSSPEAYTEDDKTEEDIPAPSNYLWLT. Over residues 22–32 the composition is skewed to acidic residues; that stretch reads YTEDDKTEEDI. The helical intramembrane region spans 43–63; the sequence is IISCFCPAYPVNIVALVFSIM. The Cytoplasmic segment spans residues 64-85; it reads SLNSYNDGDYEGARRLGRNAKW. Residues 86 to 106 form a helical membrane-spanning segment; it reads VAIASIIIGLVIIGVSCAVHF. Residues 107-110 lie on the Extracellular side of the membrane; the sequence is SRNP.

This sequence belongs to the CD225/Dispanin family. Interacts with the giant stinging tree toxin ExTxA (P0DQP3). Interacts with Nav1.7/SCN9A. Interacts with Nav1.1/SCN1A, Nav1.2/SCN2A, Nav1.3/SCN3A, Nav1.4/SCN4A, Nav1.5/SCN5A, and Nav1.6/SCN8A. As to expression, probably expressed in nociceptive neurons. Detected in dorsal root ganglion neurons.

Its subcellular location is the membrane. Functionally, probable accessory protein of voltage-gated sodium channels. This is Transmembrane protein 233 from Mus musculus (Mouse).